We begin with the raw amino-acid sequence, 777 residues long: MKFGKIFKKQMVPEWVEAYVDYNGLKRVLKEIRSYKHSKLTRAASRVSQQAEALHRSFSGLSFHPRHSERAGDIEDQVIKVDTVQEEGSRKLYETKFLKKSEEGGEFEESFFKKLDENLNKVNKFYRDKVKEVIEEAALLDKQMDALIALRVKMQKPDVDNLNLEKHPSDKVVVDTSDNTMRTQGTANTDMVHGIERTNIPEEEASHIMADIVPVSHTNGDEEEASIGDKQDLREILERVKMNDVLESPITTLKGVFGDSNEPISKKGLKKGEEQLRLVFSEFYQKLRRLKEYSFMNLLAFSKIMKKYEKIASRNASRNYMKIVDNSLIGSSDEVNRLLERVEVTFVKHFSSGNRREGMKCLRPKVKRERHRVTFFSGFFSGCSIALVIAVVFKIESRKIMEKNYGTEYMANIIPLYSLFGFIILHMLMYSANIYFWKRYRVNYTFIFGFKQGTELGDREVFLVSTGLAVLAFVCFLLNLQLDMDWRMKHHKTLPEVIPLCLATIVLFILFCPFNIIYRSSRFFFIRSLFHCICAPLYEVTLPDFFLGDHLTSQIQAIRSFELFICYYGLGEYLQRQNKCHSHGVYNAFYFVVAVIPYWLRFLQCIRRLCEEKESVHGYNALKYMLTIIAVIVRTAYELKKGRTWMILALVSSGVATGMNTFWDIVIDWGLLRKHSKNPYLRDKLLVPHKSVYFAAMVVNVILRVAWMQLVLEFNLKSLHKIAVTSIISCLEIIRRGIWSFFRLENEHLNNVGKYRAFKSVPHPFHYYDDDDVDKDD.

The 322-residue stretch at 1–322 (MKFGKIFKKQ…SRNASRNYMK (322 aa)) folds into the SPX domain. Over 1 to 372 (MKFGKIFKKQ…RPKVKRERHR (372 aa)) the chain is Cytoplasmic. The helical transmembrane segment at 373-393 (VTFFSGFFSGCSIALVIAVVF) threads the bilayer. The Extracellular portion of the chain corresponds to 394-408 (KIESRKIMEKNYGTE). Residues 409–429 (YMANIIPLYSLFGFIILHMLM) traverse the membrane as a helical segment. Over 430 to 459 (YSANIYFWKRYRVNYTFIFGFKQGTELGDR) the chain is Cytoplasmic. Residues 460–480 (EVFLVSTGLAVLAFVCFLLNL) traverse the membrane as a helical segment. Residues 481 to 496 (QLDMDWRMKHHKTLPE) are Extracellular-facing. A helical membrane pass occupies residues 497-517 (VIPLCLATIVLFILFCPFNII). Over 518–646 (YRSSRFFFIR…YELKKGRTWM (129 aa)) the chain is Cytoplasmic. In terms of domain architecture, EXS spans 581 to 775 (HSHGVYNAFY…HYYDDDDVDK (195 aa)). Residues 647-667 (ILALVSSGVATGMNTFWDIVI) form a helical membrane-spanning segment. Topologically, residues 668 to 691 (DWGLLRKHSKNPYLRDKLLVPHKS) are extracellular. A helical membrane pass occupies residues 692–712 (VYFAAMVVNVILRVAWMQLVL). The Cytoplasmic portion of the chain corresponds to 713 to 777 (EFNLKSLHKI…YDDDDVDKDD (65 aa)).

Belongs to the SYG1 (TC 2.A.94) family. In terms of tissue distribution, expressed in root epidermis and cortex, leaf blades and hydathodes, stems and flowers.

It localises to the cell membrane. Its function is as follows. May transport inorganic phosphate (Pi). This chain is Phosphate transporter PHO1 homolog 10 (PHO1-H10), found in Arabidopsis thaliana (Mouse-ear cress).